We begin with the raw amino-acid sequence, 137 residues long: Large ribosomal subunit protein uL16 (137 aa).

Belongs to the universal ribosomal protein uL16 family. Part of the 50S ribosomal subunit.

In terms of biological role, binds 23S rRNA and is also seen to make contacts with the A and possibly P site tRNAs. This is Large ribosomal subunit protein uL16 from Pseudomonas putida (strain ATCC 47054 / DSM 6125 / CFBP 8728 / NCIMB 11950 / KT2440).